A 648-amino-acid chain; its full sequence is RAF proto-oncogene serine/threonine-protein kinase (648 aa).

Serine 29 carries the phosphoserine; by MAPK1 modification. Serine 43 carries the post-translational modification Phosphoserine; by PKA and MAPK1. Positions 56–131 (NTIRVFLPNK…IGEELQVDFL (76 aa)) constitute an RBD domain. Residues 138-184 (THNFARKTFLKLAFCDICQKFLLNGFRCQTCGYKFHEHCSTKVPTMC) form a Phorbol-ester/DAG-type zinc finger. Zn(2+) is bound by residues histidine 139, cysteine 152, cysteine 155, cysteine 165, cysteine 168, histidine 173, cysteine 176, and cysteine 184. The interval 205-265 (GVPAPPSFPM…RSTSTPNVHM (61 aa)) is disordered. Serine 233 bears the Phosphoserine; by PKA mark. Residues 239–265 (TFNTSSPSSEGSLSQRQRSTSTPNVHM) show a composition bias toward polar residues. Serine 252 is subject to Phosphoserine. Serine 259 bears the Phosphoserine; by PKA, PKC and PKB/AKT1 mark. Threonine 268 carries the phosphothreonine; by autocatalysis modification. Threonine 269 carries the post-translational modification Phosphothreonine; by PKA. A disordered region spans residues 281–335 (IRSHSESASPSALSSSPNNLSPTGWSQPKTPVPAQRERAPGSGTQEKNKIRPRGQ). A compositionally biased stretch (low complexity) spans 286-301 (ESASPSALSSSPNNLS). Phosphoserine; by MAPK1 occurs at positions 289, 296, and 301. An interaction with PEBP1/RKIP region spans residues 331 to 349 (RPRGQRDSSYYWEIEASEV). Phosphoserine; by PAK1, PAK2, PAK3 and PAK5 is present on serine 338. Phosphoserine; by PAK1, PAK2 and PAK3 is present on serine 339. 2 positions are modified to phosphotyrosine; by SRC: tyrosine 340 and tyrosine 341. In terms of domain architecture, Protein kinase spans 349–609 (VMLSTRIGSG…PQILSSIELL (261 aa)). ATP-binding positions include 355–363 (IGSGSFGTV) and lysine 375. Aspartate 468 functions as the Proton acceptor in the catalytic mechanism. Serine 471 bears the Phosphoserine mark. Threonine 491 is modified (phosphothreonine). Serine 494 carries the post-translational modification Phosphoserine. Phosphoserine; by PKC is present on residues serine 497 and serine 499. Arginine 563 carries the post-translational modification Symmetric dimethylarginine; by PRMT5. The residue at position 621 (serine 621) is a Phosphoserine. The residue at position 642 (serine 642) is a Phosphoserine; by MAPK1.

Belongs to the protein kinase superfamily. TKL Ser/Thr protein kinase family. RAF subfamily. As to quaternary structure, monomer. Homodimer. Heterodimerizes with BRAF and this heterodimer possesses a highly increased kinase activity compared to the respective homodimers or monomers. Heterodimerization is mitogen-regulated and enhanced by 14-3-3 proteins. MAPK1/ERK2 activation can induce a negative feedback that promotes the dissociation of the heterodimer. Forms a multiprotein complex with Ras (M-Ras/MRAS), SHOC2 and protein phosphatase 1 (PPP1CA, PPP1CB and PPP1CC). Interacts with LZTR1. Interacts with Ras proteins; the interaction is antagonized by RIN1. Weakly interacts with RIT1. Interacts (via N-terminus) with RGS14 (via RBD domains); the interaction mediates the formation of a ternary complex with BRAF, a ternary complex inhibited by GNAI1. Probably forms a complex composed of chaperones HSP90 and HSP70, co-chaperones CDC37, PPP5C, TSC1 and client protein TSC2, CDK4, AKT, RAF1 and NR3C1; this complex does not contain co-chaperones STIP1/HOP and PTGES3/p23. Interacts with STK3/MST2; the interaction inhibits its pro-apoptotic activity. Interacts (when phosphorylated at Ser-259) with YWHAZ (unphosphorylated at 'Thr-232'). Interacts with MAP2K1/MEK1 and MAP2K2/MEK2. Interacts with MAP3K5/ASF1 (via N-terminus) and this interaction inhibits the proapoptotic function of MAP3K5/ASK1. Interacts with PAK1 (via kinase domain). The Ser-338 and Ser-339 phosphorylated form (by PAK1) interacts with BCL2. Interacts with PEBP1/RKIP and this interaction is enhanced if RAF1 is phosphorylated on residues Ser-338, Ser-339, Tyr-340 and Tyr-341. Interacts with ADCY2, ADCY5, ADCY6, DGKH, RCAN1/DSCR1, PPP1R12A, PKB/AKT1, SPRY2, SPRY4, CNKSR1/CNK1, KSR2 and PHB/prohibitin. The phosphorylated form interacts with PIN1. Interacts with PPP2CA, PPP2R1B and ROCK2. In its active form, interacts with PRMT5. Interacts with FAM83B; displaces 14-3-3 proteins from RAF1 and activates RAF1. Interacts with PDE8A; the interaction promotes RAF1 activity. Interacts with MFHAS1. Interacts with GLS. Interacts with NEK10 and MAP2K1; the interaction is direct with NEK10 and required for ERK1/2-signaling pathway activation in response to UV irradiation. It depends on Zn(2+) as a cofactor. Phosphorylation at Thr-269, Ser-338, Tyr-341, Thr-491 and Ser-494 results in its activation. Phosphorylation at Ser-29, Ser-43, Ser-289, Ser-296, Ser-301 and Ser-642 by MAPK1/ERK2 results in its inactivation. Phosphorylation at Ser-259 induces the interaction with YWHAZ and inactivates kinase activity. Dephosphorylation of Ser-259 by the SHOC2-MRAS-PP1c (SMP) complex consisting of SHOC2, GTP-bound M-Ras/MRAS and the catalytic subunit of protein phosphatase 1 (PPP1CA, PPP1CB or PPP1CC); this relieves inactivation and stimulates kinase activity. Phosphorylation at Ser-338 by PAK1 and PAK5 and Ser-339 by PAK1 is required for its mitochondrial localization. Phosphorylation at Ser-621 in response to growth factor treatment stabilizes the protein, possibly by preventing proteasomal degradation. Phosphorylation at Ser-289, Ser-296, Ser-301, Ser-338 and Ser-621 are somehow linked to the methylation potential of cells. Treatment of cells with HGF in the presence of the methylation inhibitor 5'-methylthioadenosine (MTA) results in increased phosphorylation at Ser-338 and Ser-621 and decreased phosphorylation at Ser-296, Ser-301 and Ser-338. Dephosphorylation at Ser-338 by PPP5C results in a decreased of activity. In terms of processing, methylated at Arg-563 in response to EGF treatment. This modification leads to destabilization of the protein, possibly through proteasomal degradation. In terms of tissue distribution, present in all tissues tested: testis, ovary, small intestine, colon, peripheral blood leukocytes, fetal liver, bone marrow, thymus, lymph node and spleen, and the cell lines melanoma G-361, lung carcinoma A-549, colorectal adenocarcinoma SW480, Burkitt's lymphoma Raji and lymphoblastic leukemia MOLT-4. In skeletal muscle, isoform 1 is more abundant than isoform 2.

The protein localises to the cytoplasm. It is found in the cell membrane. The protein resides in the mitochondrion. It localises to the nucleus. The catalysed reaction is L-seryl-[protein] + ATP = O-phospho-L-seryl-[protein] + ADP + H(+). The enzyme catalyses L-threonyl-[protein] + ATP = O-phospho-L-threonyl-[protein] + ADP + H(+). Regulation is a highly complex process involving membrane recruitment, protein-protein interactions, dimerization, and phosphorylation/dephosphorylation events. Ras-GTP recruits RAF1 to the membrane, thereby promoting its activation. The inactive conformation of RAF1 is maintained by autoinhibitory interactions occurring between the N-terminal regulatory and the C-terminal catalytic domains and by the binding of a 14-3-3 protein that contacts two phosphorylation sites, Ser-259 and Ser-621. Upon mitogenic stimulation, Ras and PPP2R1A cooperate to release autoinhibition and the subsequent phosphorylation of activating sites: Ser-338, Tyr-341, Thr-491, and Ser-494, yields a fully active kinase. Through a negative feedback mechanism involving MAPK1/ERK2, RAF1 is phosphorylated on Ser-29, Ser-43, Ser-289, Ser-296, Ser-301 and Ser-642 by MAPK1/ERK2, which yields an inactive, desensitized kinase. The signaling-competent conformation of RAF1 is finally re-established by the coordinated action of PIN1, a prolyl isomerase that converts pSer and pThr residues from the cis to the trans conformation, which is preferentially recognized and dephosphorylated by PPP2R1A. Activated by homodimerization and heterodimerization (with BRAF). Also regulated through association with other proteins such as KSR2, CNKSR1/CNK1, PEBP1/RKIP, PHB/prohibitin and SPRY4. PEBP1/RKIP acts by dissociating RAF1 from its substrates MAP2K1/MEK1 and MAP2K2/MEK2. PHB/prohibitin facilitates the displacement of 14-3-3 from RAF1 by activated Ras, thereby promoting cell membrane localization and phosphorylation of RAF1 at the activating Ser-338. SPRY4 inhibits Ras-independent, but not Ras-dependent, activation of RAF1. CNKSR1/CNK1 regulates Src-mediated RAF1 activation. In terms of biological role, serine/threonine-protein kinase that acts as a regulatory link between the membrane-associated Ras GTPases and the MAPK/ERK cascade, and this critical regulatory link functions as a switch determining cell fate decisions including proliferation, differentiation, apoptosis, survival and oncogenic transformation. RAF1 activation initiates a mitogen-activated protein kinase (MAPK) cascade that comprises a sequential phosphorylation of the dual-specific MAPK kinases (MAP2K1/MEK1 and MAP2K2/MEK2) and the extracellular signal-regulated kinases (MAPK3/ERK1 and MAPK1/ERK2). The phosphorylated form of RAF1 (on residues Ser-338 and Ser-339, by PAK1) phosphorylates BAD/Bcl2-antagonist of cell death at 'Ser-75'. Phosphorylates adenylyl cyclases: ADCY2, ADCY5 and ADCY6, resulting in their activation. Phosphorylates PPP1R12A resulting in inhibition of the phosphatase activity. Phosphorylates TNNT2/cardiac muscle troponin T. Can promote NF-kB activation and inhibit signal transducers involved in motility (ROCK2), apoptosis (MAP3K5/ASK1 and STK3/MST2), proliferation and angiogenesis (RB1). Can protect cells from apoptosis also by translocating to the mitochondria where it binds BCL2 and displaces BAD/Bcl2-antagonist of cell death. Plays a role in the oncogenic transformation of epithelial cells via repression of the TJ protein, occludin (OCLN) by inducing the up-regulation of a transcriptional repressor SNAI2/SLUG, which induces down-regulation of OCLN. Restricts caspase activation in response to selected stimuli, notably Fas stimulation, pathogen-mediated macrophage apoptosis, and erythroid differentiation. Regulates Rho signaling and migration, and is required for normal wound healing. The polypeptide is RAF proto-oncogene serine/threonine-protein kinase (Raf1) (Mus musculus (Mouse)).